The chain runs to 156 residues: Cyanate hydratase (156 aa).

Active-site residues include Arg-96, Glu-99, and Ser-122.

It belongs to the cyanase family.

It catalyses the reaction cyanate + hydrogencarbonate + 3 H(+) = NH4(+) + 2 CO2. Its function is as follows. Catalyzes the reaction of cyanate with bicarbonate to produce ammonia and carbon dioxide. The protein is Cyanate hydratase of Escherichia coli (strain ATCC 8739 / DSM 1576 / NBRC 3972 / NCIMB 8545 / WDCM 00012 / Crooks).